The chain runs to 212 residues: Large ribosomal subunit protein uL3 (212 aa).

Q154 carries the post-translational modification N5-methylglutamine.

Belongs to the universal ribosomal protein uL3 family. In terms of assembly, part of the 50S ribosomal subunit. Forms a cluster with proteins L14 and L19. In terms of processing, methylated by PrmB.

Its function is as follows. One of the primary rRNA binding proteins, it binds directly near the 3'-end of the 23S rRNA, where it nucleates assembly of the 50S subunit. The sequence is that of Large ribosomal subunit protein uL3 from Hydrogenovibrio crunogenus (strain DSM 25203 / XCL-2) (Thiomicrospira crunogena).